Here is a 63-residue protein sequence, read N- to C-terminus: Large ribosomal subunit protein uL29 (63 aa).

This sequence belongs to the universal ribosomal protein uL29 family.

The protein is Large ribosomal subunit protein uL29 of Marinomonas sp. (strain MWYL1).